The chain runs to 174 residues: Inactive signal peptidase IA (174 aa).

Residues 1–7 (MKKVVKY) are Cytoplasmic-facing. A helical transmembrane segment spans residues 8–28 (LISLILAIIIVLFVQTFVIVG). Topologically, residues 29 to 174 (HVIPNNDMSP…FSKWTIQFKS (146 aa)) are extracellular.

This sequence belongs to the peptidase S26 family.

It is found in the cell membrane. In terms of biological role, catalytically inactive. The polypeptide is Inactive signal peptidase IA (spsA) (Staphylococcus aureus (strain MRSA252)).